Here is a 426-residue protein sequence, read N- to C-terminus: L-cysteine:1D-myo-inositol 2-amino-2-deoxy-alpha-D-glucopyranoside ligase (426 aa).

C45 serves as a coordination point for Zn(2+). L-cysteinyl-5'-AMP contacts are provided by residues 45–48, T60, and 83–85; these read CGIT and NVT. A 'HIGH' region motif is present at residues 47-57; sequence ITPYDATHIGH. The 'ERGGDP' region motif lies at 199 to 204; the sequence is ERGGDP. W239 is an L-cysteinyl-5'-AMP binding site. Zn(2+) is bound at residue C243. An L-cysteinyl-5'-AMP-binding site is contributed by 261-263; sequence GSD. Residue H268 participates in Zn(2+) binding. V294 is an L-cysteinyl-5'-AMP binding site. The short motif at 300-304 is the 'KMSKS' region element; the sequence is KMSKS.

This sequence belongs to the class-I aminoacyl-tRNA synthetase family. MshC subfamily. In terms of assembly, monomer. Zn(2+) is required as a cofactor.

It carries out the reaction 1D-myo-inositol 2-amino-2-deoxy-alpha-D-glucopyranoside + L-cysteine + ATP = 1D-myo-inositol 2-(L-cysteinylamino)-2-deoxy-alpha-D-glucopyranoside + AMP + diphosphate + H(+). In terms of biological role, catalyzes the ATP-dependent condensation of GlcN-Ins and L-cysteine to form L-Cys-GlcN-Ins. The sequence is that of L-cysteine:1D-myo-inositol 2-amino-2-deoxy-alpha-D-glucopyranoside ligase from Clavibacter michiganensis subsp. michiganensis (strain NCPPB 382).